The primary structure comprises 426 residues: Cytochrome c biogenesis protein CcsB (426 aa).

Transmembrane regions (helical) follow at residues 14-34, 72-92, and 162-182; these read LKIAILLLLVIAVSCAAGTLI, SFWFLFLLIWLGLALSVCSFR, and LGPILIHLGMILLMIGATYGS.

Belongs to the Ccs1/CcsB family. As to quaternary structure, may interact with CcsA.

The protein localises to the cellular thylakoid membrane. Its function is as follows. Required during biogenesis of c-type cytochromes (cytochrome c6 and cytochrome f) at the step of heme attachment. The polypeptide is Cytochrome c biogenesis protein CcsB (Prochlorococcus marinus (strain NATL2A)).